A 538-amino-acid polypeptide reads, in one-letter code: MAVVSKKIPAPDKVKIRTALLSVSDKTDIIELATVLSKLGVKLLSTGGTAKAIAEAGLAVTDVSDVTNFPEIMDGRVKTLHPNVHGGLLAIRDDAEHVEAMKAHGIEAIDLSVINLYPFEEVRAKGGDYPTTVENIDIGGPAMIRASAKNHAYVTVVTDPSDYPALVEALQADDGQTSYALRQRFAAKAYARTAAYDAVISNWFAEALAIETPHYRAIGGVLKEKMRYGENPHQSAGFYLTGEKRPGVATATLLQGKQLSYNNINDTDAAYELVAEFLPENAPAVAIVKHANPCGVATGPTLAEAYRRALACDSVSAFGGVIALNRTLDAETAEEIVKLFTEVIIAPDVTEEAKSIIARKPNLRLLAAGGLPDPRAAGLTAKTVSGGLLVQSRDNGMVEDLELKVVTKRAPTAQELEDMKFAFKIAKHVKSNAVIYAKDGQTAGIGAGQMSRVDSARIAAQKAEDAAKALGLAEPLTRGSAVASEAFYPFADGLLAAIAAGATAVIQPGGSMRDQDVIDAANEHNVAMVFTGMRHFRH.

Residues 8–158 enclose the MGS-like domain; the sequence is IPAPDKVKIR…KNHAYVTVVT (151 aa).

It belongs to the PurH family.

The catalysed reaction is (6R)-10-formyltetrahydrofolate + 5-amino-1-(5-phospho-beta-D-ribosyl)imidazole-4-carboxamide = 5-formamido-1-(5-phospho-D-ribosyl)imidazole-4-carboxamide + (6S)-5,6,7,8-tetrahydrofolate. It catalyses the reaction IMP + H2O = 5-formamido-1-(5-phospho-D-ribosyl)imidazole-4-carboxamide. It participates in purine metabolism; IMP biosynthesis via de novo pathway; 5-formamido-1-(5-phospho-D-ribosyl)imidazole-4-carboxamide from 5-amino-1-(5-phospho-D-ribosyl)imidazole-4-carboxamide (10-formyl THF route): step 1/1. The protein operates within purine metabolism; IMP biosynthesis via de novo pathway; IMP from 5-formamido-1-(5-phospho-D-ribosyl)imidazole-4-carboxamide: step 1/1. In Agrobacterium fabrum (strain C58 / ATCC 33970) (Agrobacterium tumefaciens (strain C58)), this protein is Bifunctional purine biosynthesis protein PurH.